We begin with the raw amino-acid sequence, 69 residues long: Protease inhibitor carrapatin (69 aa).

Positions 8–58 (CVPTADPGPCKGFMPMWWYNIFTSQCEEFIYGGCQGNDNRYRTKEECDKTC) constitute a BPTI/Kunitz inhibitor domain. Cystine bridges form between Cys-8-Cys-58, Cys-17-Cys-41, and Cys-33-Cys-54.

Its subcellular location is the secreted. Its function is as follows. Serine protease inhibitor. The sequence is that of Protease inhibitor carrapatin from Rhipicephalus microplus (Cattle tick).